The following is a 377-amino-acid chain: Queuine tRNA-ribosyltransferase (377 aa).

The Proton acceptor role is filled by D93. Residues 93–97 (DSGGF), D147, Q191, and G218 each bind substrate. An RNA binding region spans residues 249 to 255 (GVGTPLD). The active-site Nucleophile is D268. The interval 273–277 (TRNAR) is RNA binding; important for wobble base 34 recognition. Residues C306, C308, C311, and H337 each contribute to the Zn(2+) site.

The protein belongs to the queuine tRNA-ribosyltransferase family. In terms of assembly, homodimer. Within each dimer, one monomer is responsible for RNA recognition and catalysis, while the other monomer binds to the replacement base PreQ1. Requires Zn(2+) as cofactor.

The catalysed reaction is 7-aminomethyl-7-carbaguanine + guanosine(34) in tRNA = 7-aminomethyl-7-carbaguanosine(34) in tRNA + guanine. The protein operates within tRNA modification; tRNA-queuosine biosynthesis. Functionally, catalyzes the base-exchange of a guanine (G) residue with the queuine precursor 7-aminomethyl-7-deazaguanine (PreQ1) at position 34 (anticodon wobble position) in tRNAs with GU(N) anticodons (tRNA-Asp, -Asn, -His and -Tyr). Catalysis occurs through a double-displacement mechanism. The nucleophile active site attacks the C1' of nucleotide 34 to detach the guanine base from the RNA, forming a covalent enzyme-RNA intermediate. The proton acceptor active site deprotonates the incoming PreQ1, allowing a nucleophilic attack on the C1' of the ribose to form the product. After dissociation, two additional enzymatic reactions on the tRNA convert PreQ1 to queuine (Q), resulting in the hypermodified nucleoside queuosine (7-(((4,5-cis-dihydroxy-2-cyclopenten-1-yl)amino)methyl)-7-deazaguanosine). The chain is Queuine tRNA-ribosyltransferase from Oleidesulfovibrio alaskensis (strain ATCC BAA-1058 / DSM 17464 / G20) (Desulfovibrio alaskensis).